A 79-amino-acid polypeptide reads, in one-letter code: Sec-independent protein translocase protein TatA (79 aa).

Residues 1-21 (MFSGISIWQLLILLAIVVLLF) form a helical membrane-spanning segment. 2 stretches are compositionally biased toward basic and acidic residues: residues 44 to 58 (MKDG…RLAD) and 66 to 79 (QDAE…KDKA). Residues 44-79 (MKDGEDEQDHKRLADDDQPQNKQDAEQKAEQEKDKA) are disordered.

The protein belongs to the TatA/E family. In terms of assembly, the Tat system comprises two distinct complexes: a TatABC complex, containing multiple copies of TatA, TatB and TatC subunits, and a separate TatA complex, containing only TatA subunits. Substrates initially bind to the TatABC complex, which probably triggers association of the separate TatA complex to form the active translocon.

Its subcellular location is the cell inner membrane. Functionally, part of the twin-arginine translocation (Tat) system that transports large folded proteins containing a characteristic twin-arginine motif in their signal peptide across membranes. TatA could form the protein-conducting channel of the Tat system. The sequence is that of Sec-independent protein translocase protein TatA from Alcanivorax borkumensis (strain ATCC 700651 / DSM 11573 / NCIMB 13689 / SK2).